A 587-amino-acid chain; its full sequence is NADH-quinone oxidoreductase subunit C/D (587 aa).

The NADH dehydrogenase I subunit C stretch occupies residues 1–178 (MAAPTTEHAE…EPFSLPDDVQ (178 aa)). Positions 202-587 (DFLFLNLGPN…IDFVMADVDR (386 aa)) are NADH dehydrogenase I subunit D.

The protein in the N-terminal section; belongs to the complex I 30 kDa subunit family. This sequence in the C-terminal section; belongs to the complex I 49 kDa subunit family. NDH-1 is composed of 13 different subunits. Subunits NuoB, CD, E, F, and G constitute the peripheral sector of the complex.

It localises to the cell inner membrane. It carries out the reaction a quinone + NADH + 5 H(+)(in) = a quinol + NAD(+) + 4 H(+)(out). Functionally, NDH-1 shuttles electrons from NADH, via FMN and iron-sulfur (Fe-S) centers, to quinones in the respiratory chain. The immediate electron acceptor for the enzyme in this species is believed to be ubiquinone. Couples the redox reaction to proton translocation (for every two electrons transferred, four hydrogen ions are translocated across the cytoplasmic membrane), and thus conserves the redox energy in a proton gradient. In Methylococcus capsulatus (strain ATCC 33009 / NCIMB 11132 / Bath), this protein is NADH-quinone oxidoreductase subunit C/D.